A 240-amino-acid polypeptide reads, in one-letter code: UDP-2,3-diacylglucosamine hydrolase (240 aa).

Residues Asp8, His10, Asp41, Asn79, and His114 each contribute to the Mn(2+) site. 79-80 (NR) lines the substrate pocket. Substrate-binding residues include Asp122, Ser160, Asn164, Lys167, and His195. Positions 195 and 197 each coordinate Mn(2+).

This sequence belongs to the LpxH family. Mn(2+) serves as cofactor.

The protein resides in the cell inner membrane. The catalysed reaction is UDP-2-N,3-O-bis[(3R)-3-hydroxytetradecanoyl]-alpha-D-glucosamine + H2O = 2-N,3-O-bis[(3R)-3-hydroxytetradecanoyl]-alpha-D-glucosaminyl 1-phosphate + UMP + 2 H(+). Its pathway is glycolipid biosynthesis; lipid IV(A) biosynthesis; lipid IV(A) from (3R)-3-hydroxytetradecanoyl-[acyl-carrier-protein] and UDP-N-acetyl-alpha-D-glucosamine: step 4/6. In terms of biological role, hydrolyzes the pyrophosphate bond of UDP-2,3-diacylglucosamine to yield 2,3-diacylglucosamine 1-phosphate (lipid X) and UMP by catalyzing the attack of water at the alpha-P atom. Involved in the biosynthesis of lipid A, a phosphorylated glycolipid that anchors the lipopolysaccharide to the outer membrane of the cell. This Shigella dysenteriae serotype 1 (strain Sd197) protein is UDP-2,3-diacylglucosamine hydrolase.